Reading from the N-terminus, the 121-residue chain is Phosphoribosyl-ATP pyrophosphatase (121 aa).

This sequence belongs to the PRA-PH family.

Its subcellular location is the cytoplasm. It catalyses the reaction 1-(5-phospho-beta-D-ribosyl)-ATP + H2O = 1-(5-phospho-beta-D-ribosyl)-5'-AMP + diphosphate + H(+). It functions in the pathway amino-acid biosynthesis; L-histidine biosynthesis; L-histidine from 5-phospho-alpha-D-ribose 1-diphosphate: step 2/9. In Burkholderia cenocepacia (strain HI2424), this protein is Phosphoribosyl-ATP pyrophosphatase.